A 915-amino-acid polypeptide reads, in one-letter code: Probable inorganic carbon transporter subunit DabA (915 aa).

Zn(2+) contacts are provided by Cys392, Asp394, His566, and Cys581.

This sequence belongs to the inorganic carbon transporter (TC 9.A.2) DabA family. As to quaternary structure, forms a complex with DabB. Zn(2+) serves as cofactor.

It is found in the cell inner membrane. Part of an energy-coupled inorganic carbon pump. This is Probable inorganic carbon transporter subunit DabA from Nitrosospira multiformis (strain ATCC 25196 / NCIMB 11849 / C 71).